A 388-amino-acid polypeptide reads, in one-letter code: Alcohol dehydrogenase patD (388 aa).

Cys-46 lines the Zn(2+) pocket. Residue His-47 coordinates NAD(+). Zn(2+) is bound by residues His-67, Glu-68, Cys-101, Cys-104, and Cys-112. Residue His-67 participates in substrate binding. NAD(+) contacts are provided by residues 198–203 (VALSRG), 295–297 (SLL), and 320–322 (EEA).

Belongs to the zinc-containing alcohol dehydrogenase family. It depends on Zn(2+) as a cofactor.

Its subcellular location is the cytoplasm. It is found in the cytosol. It carries out the reaction neopatulin + NADPH + H(+) = (E)-ascladiol + NADP(+). The protein operates within mycotoxin biosynthesis; patulin biosynthesis. Its function is as follows. Alcohol dehydrogenase; part of the gene cluster that mediates the biosynthesis of patulin, an acetate-derived tetraketide mycotoxin produced by several fungal species that shows antimicrobial properties against several bacteria. PatD catalyzes the conversion of neopatulin into E-ascladiol. The pathway begins with the synthesis of 6-methylsalicylic acid by the polyketide synthase (PKS) patK via condensation of acetate and malonate units. The 6-methylsalicylic acid decarboxylase patG then catalyzes the decarboxylation of 6-methylsalicylic acid to yield m-cresol (also known as 3-methylphenol). These first reactions occur in the cytosol. The intermediate m-cresol is then transported into the endoplasmic reticulum where the cytochrome P450 monooxygenase patH converts it to m-hydroxybenzyl alcohol, which is further converted to gentisyl alcohol by the cytochrome P450 monooxygenase patI. The oxidoreductases patJ and patO further convert gentisyl alcohol to isoepoxydon in the vacuole. PatN catalyzes then the transformation of isoepoxydon into phyllostine. The cluster protein patF is responsible for the conversion from phyllostine to neopatulin whereas the alcohol dehydrogenase patD converts neopatulin to E-ascladiol. The steps between isoepoxydon and E-ascladiol occur in the cytosol, and E-ascladiol is probably secreted to the extracellular space by one of the cluster-specific transporters patC or patM. Finally, the secreted patulin synthase patE catalyzes the conversion of E-ascladiol to patulin. The sequence is that of Alcohol dehydrogenase patD from Aspergillus clavatus (strain ATCC 1007 / CBS 513.65 / DSM 816 / NCTC 3887 / NRRL 1 / QM 1276 / 107).